Reading from the N-terminus, the 96-residue chain is Large ribosomal subunit protein bL27 (96 aa).

The propeptide occupies 1-9 (MLRLDLQFF). The disordered stretch occupies residues 14-35 (GVGSTKNGRDSQSKRLGAKRAD).

Belongs to the bacterial ribosomal protein bL27 family. In terms of processing, the N-terminus is cleaved by ribosomal processing cysteine protease Prp.

This is Large ribosomal subunit protein bL27 from Bacillus cytotoxicus (strain DSM 22905 / CIP 110041 / 391-98 / NVH 391-98).